A 77-amino-acid chain; its full sequence is Large ribosomal subunit protein bL31 (77 aa).

It belongs to the bacterial ribosomal protein bL31 family. Type A subfamily. Part of the 50S ribosomal subunit.

Its function is as follows. Binds the 23S rRNA. This chain is Large ribosomal subunit protein bL31, found in Synechococcus elongatus (strain ATCC 33912 / PCC 7942 / FACHB-805) (Anacystis nidulans R2).